We begin with the raw amino-acid sequence, 566 residues long: NAD-dependent malic enzyme (566 aa).

The Proton donor role is filled by tyrosine 104. Residue arginine 157 coordinates NAD(+). Lysine 175 acts as the Proton acceptor in catalysis. The a divalent metal cation site is built by glutamate 246, aspartate 247, and aspartate 270. 2 residues coordinate NAD(+): aspartate 270 and asparagine 419.

It belongs to the malic enzymes family. In terms of assembly, homotetramer. Mg(2+) is required as a cofactor. It depends on Mn(2+) as a cofactor.

The enzyme catalyses (S)-malate + NAD(+) = pyruvate + CO2 + NADH. The catalysed reaction is oxaloacetate + H(+) = pyruvate + CO2. In Cronobacter sakazakii (strain ATCC BAA-894) (Enterobacter sakazakii), this protein is NAD-dependent malic enzyme.